Reading from the N-terminus, the 679-residue chain is MPKYHLKAPYSPKGDQPTAIARLVEGVNQGQRYQTLLGATGTGKTFTIANLIAQTGRPALVLAHNKTLAAQLCNEFREFFPDNSVEYFISYYDYYQPEAYVPVSDTYIAKTSSINEEIDMLRHSATRSLFERNDVIVVASISCIYGLGIPSEYLKAAVKFKVGETLNIRSALRELVENQYSRNDIDITRGRFRVRGDVLEIGPAYEDRLVRIELFGDEVEAIRYLDPTTGEILQSLEAINIYPAKHFVTPKERLNVAVQAIRDELRGRLQFLNEQGKLLEAQRLEQRTTYDLEMLREVGYCNGVENYARHLAGRSAGTPPECLIDYFPEDWLLVVDESHVTCSQLKAMYNGDQARKKVLIEHGFRLPSAADNRPLKSEEFWSKARQTVFVSATPGDWELKQSDGHLAEQVIRPTGVLDPLVEVRPTQGQVDDLLAEIRIRAEKQERVLITTLTKRMAEDLTDYLAENDVRVRYLHSEIHSIERIEIIQDLRLGEYDVLVGVNLLREGLDLPEVSLVVILDADKEGFLRAERSLIQTIGRAARHVDGMALLYADNLTDSMSRAISETERRREIQKAYNELNGIVPRPAGKRASNSILSFLELSRRLQTDGKDADLVQITGRAVDALDSDQDAGLALDALPELIDQLETKMKEAAKNLNFEEAASLRDRIKKFRQKLIRNT.

A Helicase ATP-binding domain is found at 25–412; sequence EGVNQGQRYQ…DGHLAEQVIR (388 aa). 38–45 is an ATP binding site; it reads GATGTGKT. A Beta-hairpin motif is present at residues 91–114; that stretch reads YYDYYQPEAYVPVSDTYIAKTSSI. The region spanning 429 to 591 is the Helicase C-terminal domain; the sequence is QVDDLLAEIR…IVPRPAGKRA (163 aa). Residues 639–674 form the UVR domain; that stretch reads PELIDQLETKMKEAAKNLNFEEAASLRDRIKKFRQK.

Belongs to the UvrB family. Forms a heterotetramer with UvrA during the search for lesions. Interacts with UvrC in an incision complex.

Its subcellular location is the cytoplasm. In terms of biological role, the UvrABC repair system catalyzes the recognition and processing of DNA lesions. A damage recognition complex composed of 2 UvrA and 2 UvrB subunits scans DNA for abnormalities. Upon binding of the UvrA(2)B(2) complex to a putative damaged site, the DNA wraps around one UvrB monomer. DNA wrap is dependent on ATP binding by UvrB and probably causes local melting of the DNA helix, facilitating insertion of UvrB beta-hairpin between the DNA strands. Then UvrB probes one DNA strand for the presence of a lesion. If a lesion is found the UvrA subunits dissociate and the UvrB-DNA preincision complex is formed. This complex is subsequently bound by UvrC and the second UvrB is released. If no lesion is found, the DNA wraps around the other UvrB subunit that will check the other stand for damage. In Prochlorococcus marinus (strain MIT 9313), this protein is UvrABC system protein B.